Consider the following 85-residue polypeptide: Large ribosomal subunit protein bL27 (85 aa).

The interval 1 to 23 (MAHKKAGGSTRNGRDSESKRLGV) is disordered.

It belongs to the bacterial ribosomal protein bL27 family.

The sequence is that of Large ribosomal subunit protein bL27 from Thioalkalivibrio sulfidiphilus (strain HL-EbGR7).